We begin with the raw amino-acid sequence, 95 residues long: uncharacterized protein (95 aa).

The stretch at 60-89 forms a coiled coil; it reads VKNMINRIVEELDKRIDEIKEGLNELEKSG.

This is an uncharacterized protein from Sulfolobus islandicus filamentous virus (isolate Iceland/Hveragerdi) (SIFV).